The primary structure comprises 148 residues: Lysozyme C-1 (148 aa).

An N-terminal signal peptide occupies residues 1–18; sequence MKALLVLGFLLLSASVQA. Residues 19-148 enclose the C-type lysozyme domain; sequence KIYERCQFAR…LSGYIRNCGV (130 aa). Disulfide bonds link Cys-24-Cys-146, Cys-48-Cys-134, Cys-83-Cys-99, and Cys-95-Cys-113. Active-site residues include Glu-53 and Asp-71.

It belongs to the glycosyl hydrolase 22 family. As to quaternary structure, monomer. As to expression, expressed in lung, small intestine and spleen.

Its subcellular location is the secreted. It catalyses the reaction Hydrolysis of (1-&gt;4)-beta-linkages between N-acetylmuramic acid and N-acetyl-D-glucosamine residues in a peptidoglycan and between N-acetyl-D-glucosamine residues in chitodextrins.. In terms of biological role, lysozymes have primarily a bacteriolytic function; those in tissues and body fluids are associated with the monocyte-macrophage system and enhance the activity of immunoagents. In the intestine they may also have a digestive function. The protein is Lysozyme C-1 (Lyz1) of Rattus norvegicus (Rat).